We begin with the raw amino-acid sequence, 526 residues long: ATP synthase subunit alpha (526 aa).

171-178 (GDRQTGKT) is an ATP binding site.

It belongs to the ATPase alpha/beta chains family. F-type ATPases have 2 components, CF(1) - the catalytic core - and CF(0) - the membrane proton channel. CF(1) has five subunits: alpha(3), beta(3), gamma(1), delta(1), epsilon(1). CF(0) has four main subunits: a(1), b(1), b'(1) and c(9-12).

The protein localises to the cell inner membrane. It carries out the reaction ATP + H2O + 4 H(+)(in) = ADP + phosphate + 5 H(+)(out). Its function is as follows. Produces ATP from ADP in the presence of a proton gradient across the membrane. The alpha chain is a regulatory subunit. This chain is ATP synthase subunit alpha, found in Chlorobium phaeovibrioides (strain DSM 265 / 1930) (Prosthecochloris vibrioformis (strain DSM 265)).